The chain runs to 178 residues: Protein GrpE (178 aa).

The protein belongs to the GrpE family. In terms of assembly, homodimer.

It localises to the cytoplasm. Participates actively in the response to hyperosmotic and heat shock by preventing the aggregation of stress-denatured proteins, in association with DnaK and GrpE. It is the nucleotide exchange factor for DnaK and may function as a thermosensor. Unfolded proteins bind initially to DnaJ; upon interaction with the DnaJ-bound protein, DnaK hydrolyzes its bound ATP, resulting in the formation of a stable complex. GrpE releases ADP from DnaK; ATP binding to DnaK triggers the release of the substrate protein, thus completing the reaction cycle. Several rounds of ATP-dependent interactions between DnaJ, DnaK and GrpE are required for fully efficient folding. This Rickettsia akari (strain Hartford) protein is Protein GrpE.